A 703-amino-acid chain; its full sequence is Polyribonucleotide nucleotidyltransferase (703 aa).

The Mg(2+) site is built by D488 and D494. A KH domain is found at 555–614 (PKIVKMQINPDKIKDVIGPGGKIITKIIDETGVKIDIEQTGEVFISGIEIDMIKKAQELI). An S1 motif domain is found at 624-692 (GKTYKGKVSR…EKGRVNLSRK (69 aa)).

This sequence belongs to the polyribonucleotide nucleotidyltransferase family. The cofactor is Mg(2+).

It localises to the cytoplasm. The enzyme catalyses RNA(n+1) + phosphate = RNA(n) + a ribonucleoside 5'-diphosphate. Its function is as follows. Involved in mRNA degradation. Catalyzes the phosphorolysis of single-stranded polyribonucleotides processively in the 3'- to 5'-direction. This is Polyribonucleotide nucleotidyltransferase from Clostridioides difficile (strain 630) (Peptoclostridium difficile).